The sequence spans 1070 residues: Carbamoyl phosphate synthase large chain (1070 aa).

Residues 1–401 (MPKRDDIKTI…ALLKAVRSLE (401 aa)) are carboxyphosphate synthetic domain. ATP contacts are provided by Arg-129, Arg-169, Gly-175, Gly-176, Lys-208, Ile-210, Glu-215, Gly-241, Ile-242, His-243, Gln-284, and Glu-298. Residues 133–327 (RDLMNELGEP…IAKLAAKIAV (195 aa)) form the ATP-grasp 1 domain. Mg(2+) contacts are provided by Gln-284, Glu-298, and Asn-300. The Mn(2+) site is built by Gln-284, Glu-298, and Asn-300. Residues 402-546 (IGADHLLLEE…YSTYEEENES (145 aa)) form an oligomerization domain region. A carbamoyl phosphate synthetic domain region spans residues 547–929 (TRSAKESVIV…ALYKGFVASG (383 aa)). Residues 671–861 (EKALEILQIP…MANVATRVIL (191 aa)) form the ATP-grasp 2 domain. Residues Arg-707, Arg-746, Val-748, Glu-752, Gly-777, Val-778, His-779, Ser-780, Gln-820, and Glu-832 each contribute to the ATP site. Positions 820, 832, and 834 each coordinate Mg(2+). Mn(2+) is bound by residues Gln-820, Glu-832, and Asn-834. The 141-residue stretch at 930–1070 (TTMHDYGTVL…SEVKQPKARV (141 aa)) folds into the MGS-like domain. The allosteric domain stretch occupies residues 930–1070 (TTMHDYGTVL…SEVKQPKARV (141 aa)).

It belongs to the CarB family. As to quaternary structure, composed of two chains; the small (or glutamine) chain promotes the hydrolysis of glutamine to ammonia, which is used by the large (or ammonia) chain to synthesize carbamoyl phosphate. Tetramer of heterodimers (alpha,beta)4. The cofactor is Mg(2+). Requires Mn(2+) as cofactor.

The catalysed reaction is hydrogencarbonate + L-glutamine + 2 ATP + H2O = carbamoyl phosphate + L-glutamate + 2 ADP + phosphate + 2 H(+). The enzyme catalyses hydrogencarbonate + NH4(+) + 2 ATP = carbamoyl phosphate + 2 ADP + phosphate + 2 H(+). It participates in amino-acid biosynthesis; L-arginine biosynthesis; carbamoyl phosphate from bicarbonate: step 1/1. It functions in the pathway pyrimidine metabolism; UMP biosynthesis via de novo pathway; (S)-dihydroorotate from bicarbonate: step 1/3. Large subunit of the glutamine-dependent carbamoyl phosphate synthetase (CPSase). CPSase catalyzes the formation of carbamoyl phosphate from the ammonia moiety of glutamine, carbonate, and phosphate donated by ATP, constituting the first step of 2 biosynthetic pathways, one leading to arginine and/or urea and the other to pyrimidine nucleotides. The large subunit (synthetase) binds the substrates ammonia (free or transferred from glutamine from the small subunit), hydrogencarbonate and ATP and carries out an ATP-coupled ligase reaction, activating hydrogencarbonate by forming carboxy phosphate which reacts with ammonia to form carbamoyl phosphate. The chain is Carbamoyl phosphate synthase large chain from Listeria monocytogenes serotype 4b (strain F2365).